The primary structure comprises 349 residues: UDP-3-O-acylglucosamine N-acyltransferase (349 aa).

The Proton acceptor role is filled by His243.

It belongs to the transferase hexapeptide repeat family. LpxD subfamily. Homotrimer.

The enzyme catalyses a UDP-3-O-[(3R)-3-hydroxyacyl]-alpha-D-glucosamine + a (3R)-hydroxyacyl-[ACP] = a UDP-2-N,3-O-bis[(3R)-3-hydroxyacyl]-alpha-D-glucosamine + holo-[ACP] + H(+). It functions in the pathway bacterial outer membrane biogenesis; LPS lipid A biosynthesis. Functionally, catalyzes the N-acylation of UDP-3-O-acylglucosamine using 3-hydroxyacyl-ACP as the acyl donor. Is involved in the biosynthesis of lipid A, a phosphorylated glycolipid that anchors the lipopolysaccharide to the outer membrane of the cell. The polypeptide is UDP-3-O-acylglucosamine N-acyltransferase (Myxococcus xanthus (strain DK1622)).